We begin with the raw amino-acid sequence, 199 residues long: FMN-dependent NADH:quinone oxidoreductase (199 aa).

Serine 10 is an FMN binding site.

Belongs to the azoreductase type 1 family. Homodimer. The cofactor is FMN.

The enzyme catalyses 2 a quinone + NADH + H(+) = 2 a 1,4-benzosemiquinone + NAD(+). The catalysed reaction is N,N-dimethyl-1,4-phenylenediamine + anthranilate + 2 NAD(+) = 2-(4-dimethylaminophenyl)diazenylbenzoate + 2 NADH + 2 H(+). Quinone reductase that provides resistance to thiol-specific stress caused by electrophilic quinones. Functionally, also exhibits azoreductase activity. Catalyzes the reductive cleavage of the azo bond in aromatic azo compounds to the corresponding amines. The sequence is that of FMN-dependent NADH:quinone oxidoreductase from Cellvibrio japonicus (strain Ueda107) (Pseudomonas fluorescens subsp. cellulosa).